Consider the following 398-residue polypeptide: S-adenosylmethionine synthase (398 aa).

His16 lines the ATP pocket. Asp18 contributes to the Mg(2+) binding site. A K(+)-binding site is contributed by Glu51. Positions 64 and 108 each coordinate L-methionine. A flexible loop region spans residues 108 to 118 (QSADIAQGVDA). ATP contacts are provided by residues 176 to 178 (DSK), 242 to 243 (KF), Asp251, 257 to 258 (RK), Ala274, and Lys278. Asp251 is an L-methionine binding site. Lys282 lines the L-methionine pocket.

Belongs to the AdoMet synthase family. As to quaternary structure, homotetramer; dimer of dimers. The cofactor is Mg(2+). Requires K(+) as cofactor.

The protein localises to the cytoplasm. The catalysed reaction is L-methionine + ATP + H2O = S-adenosyl-L-methionine + phosphate + diphosphate. It functions in the pathway amino-acid biosynthesis; S-adenosyl-L-methionine biosynthesis; S-adenosyl-L-methionine from L-methionine: step 1/1. In terms of biological role, catalyzes the formation of S-adenosylmethionine (AdoMet) from methionine and ATP. The overall synthetic reaction is composed of two sequential steps, AdoMet formation and the subsequent tripolyphosphate hydrolysis which occurs prior to release of AdoMet from the enzyme. The chain is S-adenosylmethionine synthase from Rhodopseudomonas palustris (strain HaA2).